An 874-amino-acid chain; its full sequence is Alanine--tRNA ligase (874 aa).

His562, His566, Cys665, and His669 together coordinate Zn(2+).

This sequence belongs to the class-II aminoacyl-tRNA synthetase family. The cofactor is Zn(2+).

The protein localises to the cytoplasm. It catalyses the reaction tRNA(Ala) + L-alanine + ATP = L-alanyl-tRNA(Ala) + AMP + diphosphate. In terms of biological role, catalyzes the attachment of alanine to tRNA(Ala) in a two-step reaction: alanine is first activated by ATP to form Ala-AMP and then transferred to the acceptor end of tRNA(Ala). Also edits incorrectly charged Ser-tRNA(Ala) and Gly-tRNA(Ala) via its editing domain. The sequence is that of Alanine--tRNA ligase from Pseudomonas fluorescens (strain Pf0-1).